A 46-amino-acid chain; its full sequence is uncharacterized protein (46 aa).

A disordered region spans residues 1 to 46; that stretch reads MNFGIKPDVSSGPRKGGPFKELSDFSKTSPTPQQPRSLSGKSVMLP. A compositionally biased stretch (polar residues) spans 25-40; the sequence is FSKTSPTPQQPRSLSG.

This is an uncharacterized protein from Dictyostelium discoideum (Social amoeba).